The chain runs to 120 residues: Large ribosomal subunit protein uL18 (120 aa).

Belongs to the universal ribosomal protein uL18 family. In terms of assembly, part of the 50S ribosomal subunit; part of the 5S rRNA/L5/L18/L25 subcomplex. Contacts the 5S and 23S rRNAs.

In terms of biological role, this is one of the proteins that bind and probably mediate the attachment of the 5S RNA into the large ribosomal subunit, where it forms part of the central protuberance. This chain is Large ribosomal subunit protein uL18, found in Azorhizobium caulinodans (strain ATCC 43989 / DSM 5975 / JCM 20966 / LMG 6465 / NBRC 14845 / NCIMB 13405 / ORS 571).